The following is a 921-amino-acid chain: Probable dipeptidyl-aminopeptidase B (921 aa).

2 disordered regions span residues 1–33 and 45–66; these read MAGH…TAST and VAAN…RGER. Topologically, residues 1-109 are cytoplasmic; the sequence is MAGHPEENAQ…NKSVDKKLRR (109 aa). Residues 10–22 are compositionally biased toward polar residues; the sequence is QLLSTEQESMSRN. Residues 23–33 show a composition bias toward low complexity; it reads SSDSVASTAST. A helical; Signal-anchor for type II membrane protein membrane pass occupies residues 110 to 130; sequence LIWIIGGVFIGAWVLALFIFL. Residues 131–921 are Vacuolar-facing; it reads GKQAYKHSSE…VPLEIDAAKV (791 aa). A disordered region spans residues 138–157; the sequence is SSESPHDPQATSSRGSGKKV. An N-linked (GlcNAc...) asparagine glycan is attached at N362. S768 functions as the Charge relay system in the catalytic mechanism. N-linked (GlcNAc...) asparagine glycosylation occurs at N822. Residues D845 and H878 each act as charge relay system in the active site.

This sequence belongs to the peptidase S9B family.

The protein localises to the vacuole membrane. It catalyses the reaction Release of an N-terminal dipeptide, Xaa-Yaa-|-Zaa-, from a polypeptide, preferentially when Yaa is Pro, provided Zaa is neither Pro nor hydroxyproline.. Type IV dipeptidyl-peptidase which removes N-terminal dipeptides sequentially from polypeptides having unsubstituted N-termini provided that the penultimate residue is proline. The protein is Probable dipeptidyl-aminopeptidase B (dapB) of Botryotinia fuckeliana (strain B05.10) (Noble rot fungus).